The chain runs to 451 residues: Tubulin alpha chain (451 aa).

Residue glutamine 11 coordinates GTP. Position 40 is an N6-acetyllysine (lysine 40). GTP-binding residues include glutamate 71, glycine 144, threonine 145, threonine 179, asparagine 206, and asparagine 228. Glutamate 71 is a binding site for Mg(2+). Glutamate 254 is an active-site residue.

Belongs to the tubulin family. In terms of assembly, dimer of alpha and beta chains. A typical microtubule is a hollow water-filled tube with an outer diameter of 25 nm and an inner diameter of 15 nM. Alpha-beta heterodimers associate head-to-tail to form protofilaments running lengthwise along the microtubule wall with the beta-tubulin subunit facing the microtubule plus end conferring a structural polarity. Microtubules usually have 13 protofilaments but different protofilament numbers can be found in some organisms and specialized cells. The cofactor is Mg(2+). Undergoes a tyrosination/detyrosination cycle, the cyclic removal and re-addition of a C-terminal tyrosine residue by the enzymes tubulin tyrosine carboxypeptidase (TTCP) and tubulin tyrosine ligase (TTL), respectively. Post-translationally, acetylation of alpha chains at Lys-40 stabilizes microtubules and affects affinity and processivity of microtubule motors. This modification has a role in multiple cellular functions, ranging from cell motility, cell cycle progression or cell differentiation to intracellular trafficking and signaling.

Its subcellular location is the cytoplasm. The protein localises to the cytoskeleton. It carries out the reaction GTP + H2O = GDP + phosphate + H(+). Tubulin is the major constituent of microtubules, a cylinder consisting of laterally associated linear protofilaments composed of alpha- and beta-tubulin heterodimers. Microtubules grow by the addition of GTP-tubulin dimers to the microtubule end, where a stabilizing cap forms. Below the cap, tubulin dimers are in GDP-bound state, owing to GTPase activity of alpha-tubulin. This Triticum aestivum (Wheat) protein is Tubulin alpha chain (TUBA).